The chain runs to 76 residues: Antimicrobial peptide lumbricin-1 (76 aa).

The propeptide at 1 to 14 (MSLCISDYLYLTLT) is removed in mature form.

Displays antimicrobial activity against the Gram-positive bacteria B.subtilis ATCC 62037, S.aureus ATCC 15752 and S.mutans ATCC 25175, the Gram-negative bacteria E.coli ATCC 27325, P.putida ATCC 17426 and Serratia sp. ATCC 21074, and the fungi C.albicans ATCC 10231, C.neoformans ATCC 34881 and S.cerevisiae ATCC 44774. Does not possess hemolytic activity. This is Antimicrobial peptide lumbricin-1 from Lumbricus rubellus (Humus earthworm).